A 537-amino-acid polypeptide reads, in one-letter code: Chaperonin GroEL 2 (537 aa).

ATP is bound by residues 29–32, 86–90, G413, 477–479, and D493; these read TLGP, DGTTT, and NAA.

This sequence belongs to the chaperonin (HSP60) family. In terms of assembly, forms a cylinder of 14 subunits composed of two heptameric rings stacked back-to-back. Interacts with the co-chaperonin GroES.

Its subcellular location is the cytoplasm. It catalyses the reaction ATP + H2O + a folded polypeptide = ADP + phosphate + an unfolded polypeptide.. Its function is as follows. Together with its co-chaperonin GroES, plays an essential role in assisting protein folding. The GroEL-GroES system forms a nano-cage that allows encapsulation of the non-native substrate proteins and provides a physical environment optimized to promote and accelerate protein folding. This is Chaperonin GroEL 2 from Thermobifida fusca (strain YX).